The primary structure comprises 458 residues: Bifunctional protein GlmU (458 aa).

The interval 1–229 is pyrophosphorylase; it reads MNKFAIVLAA…FDESLGVNDR (229 aa). UDP-N-acetyl-alpha-D-glucosamine-binding positions include 8-11, K22, Q72, and 77-78; these read LAAG and GT. D102 serves as a coordination point for Mg(2+). UDP-N-acetyl-alpha-D-glucosamine is bound by residues G139, E154, N169, and N227. N227 is a Mg(2+) binding site. The tract at residues 230 to 250 is linker; it reads VALSQAELTMRKRINHQHMVN. Positions 251 to 458 are N-acetyltransferase; that stretch reads GVTLIDPATT…AKKMPHYRGQ (208 aa). UDP-N-acetyl-alpha-D-glucosamine is bound by residues R332 and K350. H362 functions as the Proton acceptor in the catalytic mechanism. The UDP-N-acetyl-alpha-D-glucosamine site is built by Y365 and N376. Residues A379, S404, A422, and R439 each contribute to the acetyl-CoA site.

This sequence in the N-terminal section; belongs to the N-acetylglucosamine-1-phosphate uridyltransferase family. The protein in the C-terminal section; belongs to the transferase hexapeptide repeat family. In terms of assembly, homotrimer. Requires Mg(2+) as cofactor.

Its subcellular location is the cytoplasm. The catalysed reaction is alpha-D-glucosamine 1-phosphate + acetyl-CoA = N-acetyl-alpha-D-glucosamine 1-phosphate + CoA + H(+). It carries out the reaction N-acetyl-alpha-D-glucosamine 1-phosphate + UTP + H(+) = UDP-N-acetyl-alpha-D-glucosamine + diphosphate. Its pathway is nucleotide-sugar biosynthesis; UDP-N-acetyl-alpha-D-glucosamine biosynthesis; N-acetyl-alpha-D-glucosamine 1-phosphate from alpha-D-glucosamine 6-phosphate (route II): step 2/2. It functions in the pathway nucleotide-sugar biosynthesis; UDP-N-acetyl-alpha-D-glucosamine biosynthesis; UDP-N-acetyl-alpha-D-glucosamine from N-acetyl-alpha-D-glucosamine 1-phosphate: step 1/1. The protein operates within bacterial outer membrane biogenesis; LPS lipid A biosynthesis. Functionally, catalyzes the last two sequential reactions in the de novo biosynthetic pathway for UDP-N-acetylglucosamine (UDP-GlcNAc). The C-terminal domain catalyzes the transfer of acetyl group from acetyl coenzyme A to glucosamine-1-phosphate (GlcN-1-P) to produce N-acetylglucosamine-1-phosphate (GlcNAc-1-P), which is converted into UDP-GlcNAc by the transfer of uridine 5-monophosphate (from uridine 5-triphosphate), a reaction catalyzed by the N-terminal domain. The polypeptide is Bifunctional protein GlmU (Lactococcus lactis subsp. lactis (strain IL1403) (Streptococcus lactis)).